We begin with the raw amino-acid sequence, 194 residues long: Histone H1.0-A (194 aa).

2 disordered regions span residues 1 to 29 and 96 to 194; these read MTEN…YSDM and ADEV…GRKK. In terms of domain architecture, H15 spans 22–95; that stretch reads DHPKYSDMIL…GASGSFRLAK (74 aa). Composition is skewed to basic residues over residues 102 to 164 and 172 to 194; these read PAKK…KTVR and KAKK…GRKK.

Belongs to the histone H1/H5 family.

It localises to the nucleus. Its subcellular location is the chromosome. Its function is as follows. Histones H1 are necessary for the condensation of nucleosome chains into higher-order structures. The histones H1.0 are found in cells that are in terminal stages of differentiation or that have low rates of cell division. The polypeptide is Histone H1.0-A (h1-0-a) (Xenopus laevis (African clawed frog)).